The following is a 331-amino-acid chain: Glyceraldehyde-3-phosphate dehydrogenase 2 (331 aa).

NAD(+)-binding positions include 11–12, Asp-33, and Arg-78; that span reads RI. Residues 148–150, Thr-179, 208–209, and Arg-231 contribute to the D-glyceraldehyde 3-phosphate site; these read SCT and TG. The active-site Nucleophile is the Cys-149. Asn-313 contacts NAD(+).

Belongs to the glyceraldehyde-3-phosphate dehydrogenase family. As to quaternary structure, homotetramer.

It localises to the cytoplasm. It catalyses the reaction D-glyceraldehyde 3-phosphate + phosphate + NAD(+) = (2R)-3-phospho-glyceroyl phosphate + NADH + H(+). The protein operates within carbohydrate degradation; glycolysis; pyruvate from D-glyceraldehyde 3-phosphate: step 1/5. The chain is Glyceraldehyde-3-phosphate dehydrogenase 2 (GAP2) from Kluyveromyces marxianus (Yeast).